The following is a 314-amino-acid chain: Transmembrane protein 248 (314 aa).

A helical membrane pass occupies residues 21-41; that stretch reads VVFMISVSAMAIAFLTLGYFF. Residues 78 to 106 form a disordered region; the sequence is LTNDTTTPESTMTSGQARASTQSPQALED. Residues 80-102 show a composition bias toward polar residues; it reads NDTTTPESTMTSGQARASTQSPQ. Transmembrane regions (helical) follow at residues 179–199, 236–258, and 270–290; these read QVVF…PVTV, FWCY…TVIV, and LMHT…YAVI.

It belongs to the TMEM248 family.

The protein localises to the membrane. This Homo sapiens (Human) protein is Transmembrane protein 248 (TMEM248).